A 1793-amino-acid chain; its full sequence is uncharacterized protein (1793 aa).

Disordered stretches follow at residues 156 to 189, 204 to 362, and 407 to 505; these read ARQA…ASSQ, QRES…PPKV, and ASFG…SGAA. The span at 166 to 175 shows a compositional bias: polar residues; it reads SSAQDSQELK. Basic and acidic residues predominate over residues 227–237; the sequence is SPKEKAQDEPS. Residues 238 to 247 are compositionally biased toward polar residues; the sequence is SKTPSPQNNP. Residues 248 to 258 are compositionally biased toward low complexity; sequence ASSQLSRSQHS. The span at 277 to 288 shows a compositional bias: basic and acidic residues; the sequence is KAEEDGLSKMED. The span at 289–307 shows a compositional bias: low complexity; that stretch reads STTSTGALATSSSSLGFES. Positions 317–342 are enriched in gly residues; the sequence is AVGGEGEKISGGGGGGKGGGGGGAGD. The segment covering 434-450 has biased composition (low complexity); that stretch reads STTPSTNTTRTPSPTSS. Residues 463-476 show a composition bias toward polar residues; the sequence is DTSSTEVGSGPSDS. The segment covering 485–505 has biased composition (low complexity); it reads PGTAPLTEPLPETPEAASGAA. Threonine 733 carries the phosphothreonine modification. 7 disordered regions span residues 757-809, 829-917, 1090-1147, 1161-1187, 1229-1249, 1408-1465, and 1482-1567; these read RSES…SKFA, MERG…FTDG, RDIR…GSGS, QRED…NSSS, QKTP…ATKP, TGGV…KSNS, and GELL…PLPF. 2 stretches are compositionally biased toward basic and acidic residues: residues 829 to 839 and 846 to 872; these read MERGEVMDTSH and KETE…HSEA. The segment covering 1113–1123 has biased composition (low complexity); sequence KGSGDSSDKGS. Residues 1161-1174 show a composition bias toward basic and acidic residues; sequence QREDSMDREPRESM. Serine 1187 bears the Phosphoserine mark. The span at 1231-1246 shows a compositional bias: basic and acidic residues; sequence TPEKLKEEEVKEEGKA. A compositionally biased stretch (low complexity) spans 1513–1528; sequence SQVPSSSKGSQVSGTS. Residues 1546–1555 are compositionally biased toward pro residues; it reads PPGPQSPEHP. At arginine 1774 the chain carries Omega-N-methylarginine.

As to expression, expressed in muscle, heart, kidney and liver but barely detectable in lung, pancreas and brain. In liver veins, expressed in hepatic vein, extrahepatic portal vein and intrahepatic portal vein.

This is an uncharacterized protein from Homo sapiens (Human).